A 179-amino-acid polypeptide reads, in one-letter code: MSIPFSNTHYRIPQGFGNLLEGLTREILREQPDNIPAFAAAYFENLLEKREKTNFDPAEWGAKVDDRFYNNHAFKDEPPEKSETQKIQPEKVAIEKETMPQETVKEKETQVSFVEEPTEEPQKEEEEEEDEEDLEGLLVREGMQDAAVKIQAVFRGHKTRKEYLKKRDSTDETADENNE.

Over residues 72–109 (HAFKDEPPEKSETQKIQPEKVAIEKETMPQETVKEKET) the composition is skewed to basic and acidic residues. Disordered regions lie at residues 72-138 (HAFK…EGLL) and 159-179 (TRKE…ENNE). A compositionally biased stretch (acidic residues) spans 116 to 135 (EPTEEPQKEEEEEEDEEDLE). One can recognise an IQ domain in the interval 143 to 172 (MQDAAVKIQAVFRGHKTRKEYLKKRDSTDE). Residues 161 to 170 (KEYLKKRDST) are compositionally biased toward basic and acidic residues.

Homodimer. May interact with ROPN1. Testis- and sperm-specific.

It localises to the membrane. Sperm surface zona pellucida binding protein. Helps to bind spermatozoa to the zona pellucida with high affinity. Might function in binding zona pellucida and carbohydrates. This is Sperm surface protein Sp17 (SPA17) from Monodelphis domestica (Gray short-tailed opossum).